The sequence spans 362 residues: 3-dehydroquinate synthase (362 aa).

Residues Asp-71–Lys-76, Gly-105–Asp-109, Thr-129–Thr-130, Lys-142, Lys-151, and Cys-169–Thr-172 contribute to the NAD(+) site. Zn(2+) contacts are provided by Glu-184, His-247, and His-264.

Belongs to the sugar phosphate cyclases superfamily. Dehydroquinate synthase family. Co(2+) serves as cofactor. It depends on Zn(2+) as a cofactor. NAD(+) is required as a cofactor.

The protein resides in the cytoplasm. The catalysed reaction is 7-phospho-2-dehydro-3-deoxy-D-arabino-heptonate = 3-dehydroquinate + phosphate. The protein operates within metabolic intermediate biosynthesis; chorismate biosynthesis; chorismate from D-erythrose 4-phosphate and phosphoenolpyruvate: step 2/7. In terms of biological role, catalyzes the conversion of 3-deoxy-D-arabino-heptulosonate 7-phosphate (DAHP) to dehydroquinate (DHQ). In Salmonella agona (strain SL483), this protein is 3-dehydroquinate synthase.